Here is a 166-residue protein sequence, read N- to C-terminus: Putative methyltransferase Rv1506c (166 aa).

This sequence belongs to the methyltransferase superfamily.

Functionally, probably plays a role in host phagosome maturation arrest, as well as a role in the synthesis of acyltrehalose-containing glycolipids. This Mycobacterium tuberculosis (strain ATCC 25618 / H37Rv) protein is Putative methyltransferase Rv1506c.